Consider the following 515-residue polypeptide: Maturase K (515 aa).

Belongs to the intron maturase 2 family. MatK subfamily.

Its subcellular location is the plastid. The protein resides in the chloroplast. Its function is as follows. Usually encoded in the trnK tRNA gene intron. Probably assists in splicing its own and other chloroplast group II introns. The polypeptide is Maturase K (Pinus pumila (Dwarf Siberian pine)).